A 486-amino-acid chain; its full sequence is Cobyric acid synthase (486 aa).

A GATase cobBQ-type domain is found at 250–438; sequence AFRIVVPVPP…LHGMFDTPSA (189 aa). Cys-331 (nucleophile) is an active-site residue. Residue His-430 is part of the active site.

This sequence belongs to the CobB/CobQ family. CobQ subfamily.

Its pathway is cofactor biosynthesis; adenosylcobalamin biosynthesis. Its function is as follows. Catalyzes amidations at positions B, D, E, and G on adenosylcobyrinic A,C-diamide. NH(2) groups are provided by glutamine, and one molecule of ATP is hydrogenolyzed for each amidation. The protein is Cobyric acid synthase of Herminiimonas arsenicoxydans.